The primary structure comprises 257 residues: Type III pantothenate kinase (257 aa).

6-13 is an ATP binding site; it reads DVGNTNTV. Residues Tyr-102 and 109–112 contribute to the substrate site; that span reads GADR. Asp-111 acts as the Proton acceptor in catalysis. Asp-131 contacts K(+). ATP is bound at residue Thr-134. Thr-186 is a substrate binding site.

The protein belongs to the type III pantothenate kinase family. Homodimer. The cofactor is NH4(+). K(+) is required as a cofactor.

It is found in the cytoplasm. The enzyme catalyses (R)-pantothenate + ATP = (R)-4'-phosphopantothenate + ADP + H(+). The protein operates within cofactor biosynthesis; coenzyme A biosynthesis; CoA from (R)-pantothenate: step 1/5. In terms of biological role, catalyzes the phosphorylation of pantothenate (Pan), the first step in CoA biosynthesis. This chain is Type III pantothenate kinase, found in Leptospira interrogans serogroup Icterohaemorrhagiae serovar copenhageni (strain Fiocruz L1-130).